The sequence spans 117 residues: Large ribosomal subunit protein uL22 (117 aa).

The protein belongs to the universal ribosomal protein uL22 family. As to quaternary structure, part of the 50S ribosomal subunit.

Its function is as follows. This protein binds specifically to 23S rRNA; its binding is stimulated by other ribosomal proteins, e.g. L4, L17, and L20. It is important during the early stages of 50S assembly. It makes multiple contacts with different domains of the 23S rRNA in the assembled 50S subunit and ribosome. The globular domain of the protein is located near the polypeptide exit tunnel on the outside of the subunit, while an extended beta-hairpin is found that lines the wall of the exit tunnel in the center of the 70S ribosome. This Staphylococcus aureus (strain USA300) protein is Large ribosomal subunit protein uL22.